A 229-amino-acid chain; its full sequence is 2-C-methyl-D-erythritol 4-phosphate cytidylyltransferase (229 aa).

It belongs to the IspD/TarI cytidylyltransferase family. IspD subfamily.

The enzyme catalyses 2-C-methyl-D-erythritol 4-phosphate + CTP + H(+) = 4-CDP-2-C-methyl-D-erythritol + diphosphate. It functions in the pathway isoprenoid biosynthesis; isopentenyl diphosphate biosynthesis via DXP pathway; isopentenyl diphosphate from 1-deoxy-D-xylulose 5-phosphate: step 2/6. Catalyzes the formation of 4-diphosphocytidyl-2-C-methyl-D-erythritol from CTP and 2-C-methyl-D-erythritol 4-phosphate (MEP). The polypeptide is 2-C-methyl-D-erythritol 4-phosphate cytidylyltransferase (Neisseria meningitidis serogroup C / serotype 2a (strain ATCC 700532 / DSM 15464 / FAM18)).